A 66-amino-acid polypeptide reads, in one-letter code: DNA gyrase inhibitor YacG (66 aa).

Zn(2+)-binding residues include Cys-10, Cys-13, Cys-29, and Cys-33. The interval 46–66 is disordered; sequence KRIPSDVQITDSDEWSDETRY. Residues 56 to 66 are compositionally biased toward acidic residues; the sequence is DSDEWSDETRY.

Belongs to the DNA gyrase inhibitor YacG family. In terms of assembly, interacts with GyrB. Zn(2+) serves as cofactor.

In terms of biological role, inhibits all the catalytic activities of DNA gyrase by preventing its interaction with DNA. Acts by binding directly to the C-terminal domain of GyrB, which probably disrupts DNA binding by the gyrase. The sequence is that of DNA gyrase inhibitor YacG from Sodalis glossinidius (strain morsitans).